The chain runs to 125 residues: Large ribosomal subunit protein bL12 (125 aa).

The protein belongs to the bacterial ribosomal protein bL12 family. In terms of assembly, homodimer. Part of the ribosomal stalk of the 50S ribosomal subunit. Forms a multimeric L10(L12)X complex, where L10 forms an elongated spine to which 2 to 4 L12 dimers bind in a sequential fashion. Binds GTP-bound translation factors.

Functionally, forms part of the ribosomal stalk which helps the ribosome interact with GTP-bound translation factors. Is thus essential for accurate translation. In Chlorobium phaeobacteroides (strain DSM 266 / SMG 266 / 2430), this protein is Large ribosomal subunit protein bL12.